Reading from the N-terminus, the 429-residue chain is Trigger factor (429 aa).

The PPIase FKBP-type domain occupies 163 to 248 (GDFVVIDFVG…IKEIKVKETP (86 aa)).

Belongs to the FKBP-type PPIase family. Tig subfamily.

It is found in the cytoplasm. It carries out the reaction [protein]-peptidylproline (omega=180) = [protein]-peptidylproline (omega=0). In terms of biological role, involved in protein export. Acts as a chaperone by maintaining the newly synthesized protein in an open conformation. Functions as a peptidyl-prolyl cis-trans isomerase. The protein is Trigger factor of Halothermothrix orenii (strain H 168 / OCM 544 / DSM 9562).